The primary structure comprises 332 residues: 2,3-diketo-L-gulonate reductase (332 aa).

The active-site Proton donor is His44. NAD(+) contacts are provided by residues Ile168–Ser174, Trp224–Lys225, and Gly304–Glu306.

Belongs to the LDH2/MDH2 oxidoreductase family. DlgD subfamily. As to quaternary structure, homodimer.

It localises to the cytoplasm. It catalyses the reaction 3-dehydro-L-gulonate + NAD(+) = 2,3-dioxo-L-gulonate + NADH + H(+). The catalysed reaction is 3-dehydro-L-gulonate + NADP(+) = 2,3-dioxo-L-gulonate + NADPH + H(+). Functionally, catalyzes the reduction of 2,3-diketo-L-gulonate in the presence of NADH, to form 3-keto-L-gulonate. The chain is 2,3-diketo-L-gulonate reductase from Escherichia coli O6:K15:H31 (strain 536 / UPEC).